The chain runs to 185 residues: Photosystem I assembly protein Ycf4 (185 aa).

2 helical membrane-spanning segments follow: residues 24–44 (YIIG…SISS) and 66–86 (IIMG…WYLV).

The protein belongs to the Ycf4 family.

It localises to the cellular thylakoid membrane. In terms of biological role, seems to be required for the assembly of the photosystem I complex. This chain is Photosystem I assembly protein Ycf4, found in Prochlorococcus marinus (strain AS9601).